The following is a 570-amino-acid chain: MSEKHPGPLVVEGKLTDAERMKHESNYLRGTIAEDLNDGLTGGFKGDNFLLIRFHGMYQQDDRDIRAERAEQKLEPRHAMLLRCRLPGGVITTKQWQAIDKFAGENTIYGSIRLTNRQTFQFHGILKKNVKPVHQMLHSVGLDALATANDMNRNVLCTSNPYESQLHAEAYEWAKKISEHLLPRTRAYAEIWLDQEKVATTDEEPILGQTYLPRKFKTTVVIPPQNDIDLHANDMNFVAIAENGKLVGFNLLVGGGLSIEHGNKKTYARTASEFGYLPLEHTLAVAEAVVTTQRDWGNRTDRKNAKTKYTLERVGVETFKAEVERRAGIKFEPIRPYEFTGRGDRIGWVKGIDDNWHLTLFIENGRILDYPARPLKTGLLEIAKIHKGDFRITANQNLIIAGVPESEKAKIEKIAKESGLMNAVTPQRENSMACVSFPTCPLAMAEAERFLPSFIDNIDNLMAKHGVSDEHIVMRVTGCPNGCGRAMLAEVGLVGKAPGRYNLHLGGNRIGTRIPRMYKENITEPEILASLDELIGRWAKEREAGEGFGDFTVRAGIIRPVLDPARDLWD.

Residues Cys-434, Cys-440, Cys-479, and Cys-483 each contribute to the [4Fe-4S] cluster site. Cys-483 is a binding site for siroheme.

The protein belongs to the nitrite and sulfite reductase 4Fe-4S domain family. In terms of assembly, alpha(8)-beta(8). The alpha component is a flavoprotein, the beta component is a hemoprotein. The cofactor is siroheme. It depends on [4Fe-4S] cluster as a cofactor.

It carries out the reaction hydrogen sulfide + 3 NADP(+) + 3 H2O = sulfite + 3 NADPH + 4 H(+). It participates in sulfur metabolism; hydrogen sulfide biosynthesis; hydrogen sulfide from sulfite (NADPH route): step 1/1. Its function is as follows. Component of the sulfite reductase complex that catalyzes the 6-electron reduction of sulfite to sulfide. This is one of several activities required for the biosynthesis of L-cysteine from sulfate. This chain is Sulfite reductase [NADPH] hemoprotein beta-component (cysI), found in Escherichia coli (strain K12).